The sequence spans 789 residues: Cadherin-6 (789 aa).

The first 18 residues, 1–18 (MRTYRYFLLLFWVGQPYP), serve as a signal peptide directing secretion. The propeptide occupies 19-53 (TFSNPLSKRTSGFPAKRRALELSANSRNELSRSKR). Cadherin domains are found at residues 54-159 (SWMW…EPIF), 160-268 (TKDV…PPRF), 269-383 (PQST…PPVF), 384-486 (SKPA…DNAP), and 487-608 (EFAE…LIHP). Residues 54–615 (SWMWNQFFLL…IHPTGLSTGA (562 aa)) lie on the Extracellular side of the membrane. Asparagine 255 is a glycosylation site (N-linked (GlcNAc...) asparagine). The segment at 259 to 288 (TDVNDNPPRFPQSTYQFKTPESSPPGTPIG) is disordered. Residues 269–279 (PQSTYQFKTPE) are compositionally biased toward polar residues. 4 N-linked (GlcNAc...) asparagine glycosylation sites follow: asparagine 399, asparagine 437, asparagine 455, and asparagine 536. A helical transmembrane segment spans residues 616-636 (LVAILLCIVILLVTVVLFAAL). Residues 637 to 789 (RRQRKKEPLI…YGGMDSDKDS (153 aa)) are Cytoplasmic-facing. Serine 785 and serine 789 each carry phosphoserine.

In terms of tissue distribution, highly expressed in kidney and brain.

It localises to the cell membrane. Its function is as follows. Cadherins are calcium-dependent cell adhesion proteins. They preferentially interact with themselves in a homophilic manner in connecting cells; cadherins may thus contribute to the sorting of heterogeneous cell types. This is Cadherin-6 (Cdh6) from Rattus norvegicus (Rat).